The primary structure comprises 388 residues: Probable ubiquitin-conjugating enzyme E2 L709 (388 aa).

The UBC core domain occupies N3–F162. C95 functions as the Glycyl thioester intermediate in the catalytic mechanism. The interval V195–K388 is disordered. Acidic residues-rich tracts occupy residues S221–S238 and D246–E297. Low complexity predominate over residues K310–K388.

The protein belongs to the ubiquitin-conjugating enzyme family.

It carries out the reaction S-ubiquitinyl-[E1 ubiquitin-activating enzyme]-L-cysteine + [E2 ubiquitin-conjugating enzyme]-L-cysteine = [E1 ubiquitin-activating enzyme]-L-cysteine + S-ubiquitinyl-[E2 ubiquitin-conjugating enzyme]-L-cysteine.. It participates in protein modification; protein ubiquitination. Functionally, catalyzes the covalent attachment of ubiquitin to other proteins. This chain is Probable ubiquitin-conjugating enzyme E2 L709, found in Acanthamoeba polyphaga (Amoeba).